We begin with the raw amino-acid sequence, 491 residues long: MDTSSSLLFFSFFFFIIIVIFNKINGLRSSPASKKKLNDHHVTSQSHGPKFPHGSLGWPVIGETIEFVSSAYSDRPESFMDKRRLMYGRVFKSHIFGTATIVSTDAEVNRAVLQSDSTAFVPFYPKTVRELMGKSSILLINGSLHRRFHGLVGSFLKSPLLKAQIVRDMHKFLSESMDLWSEDQPVLLQDVSKTVAFKVLAKALISVEKGEDLEELKREFENFISGLMSLPINFPGTQLHRSLQAKKNMVKQVERIIEGKIRKTKNKEEDDVIAKDVVDVLLKDSSEHLTHNLIANNMIDMMIPGHDSVPVLITLAVKFLSDSPAALNLLTEENMKLKSLKELTGEPLYWNDYLSLPFTQKVITETLRMGNVIIGVMRKAMKDVEIKGYVIPKGWCFLAYLRSVHLDKLYYESPYKFNPWRWQERDMNTSSFSPFGGGQRLCPGLDLARLETSVFLHHLVTRFRWIAEEDTIINFPTVHMKNKLPIWIKRI.

The helical transmembrane segment at Leu7–Leu27 threads the bilayer. A heme-binding site is contributed by Cys442.

Belongs to the cytochrome P450 family. Heme is required as a cofactor. As to expression, expressed in leaf vascular tissue.

The protein resides in the endoplasmic reticulum membrane. The enzyme catalyses 3-epi-6-deoxocathasterone + reduced [NADPH--hemoprotein reductase] + O2 = 6-deoxotyphasterol + oxidized [NADPH--hemoprotein reductase] + H2O + H(+). It catalyses the reaction (22S,24R)-22-hydroxy-5alpha-ergostan-3-one + reduced [NADPH--hemoprotein reductase] + O2 = 3-dehydro-6-deoxoteasterone + oxidized [NADPH--hemoprotein reductase] + H2O + H(+). It functions in the pathway plant hormone biosynthesis; brassinosteroid biosynthesis. Functionally, involved in brassinosteroid (BR) biosynthesis. May convert teasterone (TE) to 3-dehydroteasterone (3DT, 3-DHT), or 6-deoxoteasterone (6-deoxoTE) to 3-dehydro-6-deoxoteasterone (6-deoxo3DT, 6-deoxo3DHT). C-23 hydroxylase that converts directly (22S,24R)-22-hydroxy-5-alpha-ergostan-3-one and 3-epi-6-deoxocathasterone to 3-dehydro-6-deoxoteasterone (6-deoxo3DT, 6-deoxo3DHT) and 6-deoxotyphasterol (6-deoxoTY), respectively. These C-23 hydroxylation shortcuts bypass campestanol, 6-deoxocathasterone, and 6-deoxoteasterone (6-deoxoTE). Also catalyzes the conversion of cathasterone to teasterone (TE), 6-deoxotyphasterol (6-deoxoTY) to 6-deoxocathasterone (6-deoxoCT), (22S,24R)-22-hydroxyergost-4-en-3-one (22-OH-4-en-3-one) to (22R,23R)-22,23-dihydroxy-campest-4-en-3-one (22,23-diOH-4-en-3-one) and (22S)-22-hydroxycampesterol (22-OHCR) to (22R,23R)-22,23-dihydroxycampesterol (22,23-diOHCR). The protein is 3-epi-6-deoxocathasterone 23-monooxygenase CYP90D1 of Arabidopsis thaliana (Mouse-ear cress).